Here is a 405-residue protein sequence, read N- to C-terminus: 3-hydroxy-3-methylglutaryl-coenzyme A reductase (405 aa).

Active-site charge relay system residues include Glu101 and Asp305. Residue His400 is the Proton donor of the active site.

This sequence belongs to the HMG-CoA reductase family. As to quaternary structure, homodimer.

Its subcellular location is the cytoplasm. The catalysed reaction is (R)-mevalonate + 2 NADP(+) + CoA = (3S)-3-hydroxy-3-methylglutaryl-CoA + 2 NADPH + 2 H(+). It participates in metabolic intermediate biosynthesis; (R)-mevalonate biosynthesis; (R)-mevalonate from acetyl-CoA: step 3/3. With respect to regulation, is competitively inhibited by lovastatin (formerly called mevinolin). Lovastatin also blocks the growth of H.salinarum, and this effect is reversed by addition of mevalonate, indicating the critical role that the mevalonate pathway plays in isoprenoid biosynthesis by these archaea. In terms of biological role, catalyzes the NADPH-dependent reductive deacylation of (S)-3-hydroxy-3-methylglutaryl-CoA (HMG-CoA) to (R)-mevalonate. Cannot use NADH instead of NADPH. Functions in the mevalonate (MVA) pathway leading to isopentenyl diphosphate (IPP), a key precursor for the biosynthesis of isoprenoid compounds such as archaeal membrane lipids. The chain is 3-hydroxy-3-methylglutaryl-coenzyme A reductase (hmgA) from Halobacterium salinarum (strain ATCC 29341 / DSM 671 / R1).